Here is a 364-residue protein sequence, read N- to C-terminus: tRNA 2-selenouridine synthase (364 aa).

Residues 14–137 enclose the Rhodanese domain; that stretch reads LIADTPIIDV…LRQTAIQATI (124 aa). Cys97 serves as the catalytic S-selanylcysteine intermediate.

It belongs to the SelU family. As to quaternary structure, monomer.

The catalysed reaction is 5-methylaminomethyl-2-thiouridine(34) in tRNA + selenophosphate + (2E)-geranyl diphosphate + H2O + H(+) = 5-methylaminomethyl-2-selenouridine(34) in tRNA + (2E)-thiogeraniol + phosphate + diphosphate. It carries out the reaction 5-methylaminomethyl-2-thiouridine(34) in tRNA + (2E)-geranyl diphosphate = 5-methylaminomethyl-S-(2E)-geranyl-thiouridine(34) in tRNA + diphosphate. The enzyme catalyses 5-methylaminomethyl-S-(2E)-geranyl-thiouridine(34) in tRNA + selenophosphate + H(+) = 5-methylaminomethyl-2-(Se-phospho)selenouridine(34) in tRNA + (2E)-thiogeraniol. It catalyses the reaction 5-methylaminomethyl-2-(Se-phospho)selenouridine(34) in tRNA + H2O = 5-methylaminomethyl-2-selenouridine(34) in tRNA + phosphate. Involved in the post-transcriptional modification of the uridine at the wobble position (U34) of tRNA(Lys), tRNA(Glu) and tRNA(Gln). Catalyzes the conversion of 2-thiouridine (S2U-RNA) to 2-selenouridine (Se2U-RNA). Acts in a two-step process involving geranylation of 2-thiouridine (S2U) to S-geranyl-2-thiouridine (geS2U) and subsequent selenation of the latter derivative to 2-selenouridine (Se2U) in the tRNA chain. The polypeptide is tRNA 2-selenouridine synthase (Escherichia coli O157:H7).